An 81-amino-acid chain; its full sequence is Small ribosomal subunit protein uS17 (81 aa).

It belongs to the universal ribosomal protein uS17 family. Part of the 30S ribosomal subunit.

Functionally, one of the primary rRNA binding proteins, it binds specifically to the 5'-end of 16S ribosomal RNA. The polypeptide is Small ribosomal subunit protein uS17 (Protochlamydia amoebophila (strain UWE25)).